A 462-amino-acid polypeptide reads, in one-letter code: NAD-capped RNA hydrolase NUDT12 (462 aa).

ANK repeat units follow at residues 11–40 (EIVT…SLLN), 45–74 (NGWT…DRSI), and 78–98 (SRQT…ANLL). The residue at position 185 (Lys185) is an N6-succinyllysine. Positions 284 and 287 each coordinate Zn(2+). Position 292 is an N6-succinyllysine (Lys292). Cys302 and Cys307 together coordinate Zn(2+). Residues Tyr318, 354 to 356 (AGF), Glu370, Glu374, and Glu415 contribute to the substrate site. One can recognise a Nudix hydrolase domain in the interval 319–453 (PRVDPVVIMQ…SRAIAHQLIK (135 aa)). Mg(2+) contacts are provided by Ala354, Glu370, Glu374, and Glu415. The short motif at 355–376 (GFIEPGETIEDAVRREVEEESG) is the Nudix box element. The short motif at 460–462 (PNL) is the Microbody targeting signal element.

Belongs to the Nudix hydrolase family. NudC subfamily. As to quaternary structure, homodimer. Homodimerization is essential for its catalytic activity and protein stability. Interacts (via ANK repeats) with BLMH. Mg(2+) is required as a cofactor. Zn(2+) serves as cofactor.

The protein resides in the cytoplasm. The protein localises to the peroxisome. Its subcellular location is the cytoplasmic granule. The enzyme catalyses a 5'-end NAD(+)-phospho-ribonucleoside in mRNA + H2O = a 5'-end phospho-adenosine-phospho-ribonucleoside in mRNA + beta-nicotinamide D-ribonucleotide + 2 H(+). It carries out the reaction NAD(+) + H2O = beta-nicotinamide D-ribonucleotide + AMP + 2 H(+). The catalysed reaction is NADH + H2O = reduced beta-nicotinamide D-ribonucleotide + AMP + 2 H(+). It catalyses the reaction NADPH + H2O = reduced beta-nicotinamide D-ribonucleotide + adenosine 2',5'-bisphosphate + 2 H(+). MRNA decapping enzyme that specifically removes the nicotinamide adenine dinucleotide (NAD) cap from a subset of mRNAs by hydrolyzing the diphosphate linkage to produce nicotinamide mononucleotide (NMN) and 5' monophosphate mRNA. The NAD-cap is present at the 5'-end of some RNAs; in contrast to the canonical N7 methylguanosine (m7G) cap, the NAD cap promotes mRNA decay. Preferentially acts on NAD-capped transcripts in response to nutrient stress. Also acts on free nicotinamide adenine dinucleotide molecules: hydrolyzes NAD(H) into NMN(H) and AMP, and NADPH into NMNH and 2',5'-ADP. May act to regulate the concentration of peroxisomal nicotinamide nucleotide cofactors required for oxidative metabolism in this organelle. Regulates the levels of circadian clock components PER1, PER2, PER3 and CRY2 in the liver. The sequence is that of NAD-capped RNA hydrolase NUDT12 from Pongo abelii (Sumatran orangutan).